The sequence spans 85 residues: MAKGQSLQDPFLNALRRERIPVSIYLVNGIKLQGQIESFDQFVILLKNTVNQMVYKHAISTVVPARPVNHHHASDRPATLEKTEE.

Positions 9–68 (DPFLNALRRERIPVSIYLVNGIKLQGQIESFDQFVILLKNTVNQMVYKHAISTVVPARPV) constitute a Sm domain. The segment at 66–85 (RPVNHHHASDRPATLEKTEE) is disordered. Positions 72–85 (HASDRPATLEKTEE) are enriched in basic and acidic residues.

It belongs to the Hfq family. Homohexamer.

Its function is as follows. RNA chaperone that binds small regulatory RNA (sRNAs) and mRNAs to facilitate mRNA translational regulation in response to envelope stress, environmental stress and changes in metabolite concentrations. Also binds with high specificity to tRNAs. This chain is RNA-binding protein Hfq, found in Photobacterium profundum (strain SS9).